The following is a 397-amino-acid chain: Chalcone synthase 2 (397 aa).

Cys168 is a catalytic residue.

The protein belongs to the thiolase-like superfamily. Chalcone/stilbene synthases family.

It carries out the reaction (E)-4-coumaroyl-CoA + 3 malonyl-CoA + 3 H(+) = 2',4,4',6'-tetrahydroxychalcone + 3 CO2 + 4 CoA. It functions in the pathway secondary metabolite biosynthesis; flavonoid biosynthesis. Functionally, the primary product of this enzyme is 4,2',4',6'-tetrahydroxychalcone (also termed naringenin-chalcone or chalcone) which can under specific conditions spontaneously isomerize into naringenin. This Daucus carota (Wild carrot) protein is Chalcone synthase 2 (CHS2).